The chain runs to 190 residues: A-type ATP synthase subunit E (190 aa).

The protein belongs to the V-ATPase E subunit family. Has multiple subunits with at least A(3), B(3), C, D, E, F, H, I and proteolipid K(x).

The protein resides in the cell membrane. Its function is as follows. Component of the A-type ATP synthase that produces ATP from ADP in the presence of a proton gradient across the membrane. This is A-type ATP synthase subunit E from Pyrobaculum islandicum (strain DSM 4184 / JCM 9189 / GEO3).